The primary structure comprises 69 residues: Iota-conotoxin LtIIIA (69 aa).

Residues 1 to 20 (MLKMGVLLFTFLVLFPLTTL) form the signal peptide. A propeptide spanning residues 21-52 (ELDTDRPVERHAAIKQDLKPQERRGIRLHAPR) is cleaved from the precursor. 4-carboxyglutamate occurs at positions 54 and 57. Disulfide bonds link Cys55–Cys67, Cys56–Cys65, and Cys61–Cys68. Position 58 is a 4-hydroxyproline (Pro58).

As to expression, expressed by the venom duct.

The protein resides in the secreted. Iota-conotoxins bind to voltage-gated sodium channels and act as agonists by shifting the voltage-dependence of activation to more hyperpolarized levels. This toxin enhances tetrodotoxin-sensitive sodium current in rat dorsal root ganglion neurons. The sequence is that of Iota-conotoxin LtIIIA from Conus litteratus (Lettered cone).